The sequence spans 184 residues: MNNLENIVEQLKRNRVVAYPTEAVFGLGCNPNNESAVRALLKLKKRPEEKGLILIAPTKELLLPYIDENKLTAAHWQIFETPSERAITWVMPAKKAVPQYLTGQFDTIAVRLCCIPAVIDLCERTGFALTSTSCNLTGQEPCRTADEVKLQFGADFPVLEAETAGKTNPSEIRDIFTQHIFRQG.

In terms of domain architecture, YrdC-like spans 1–184; the sequence is MNNLENIVEQ…IFTQHIFRQG (184 aa).

This sequence belongs to the SUA5 family. TsaC subfamily.

The protein localises to the cytoplasm. It catalyses the reaction L-threonine + hydrogencarbonate + ATP = L-threonylcarbamoyladenylate + diphosphate + H2O. Functionally, required for the formation of a threonylcarbamoyl group on adenosine at position 37 (t(6)A37) in tRNAs that read codons beginning with adenine. Catalyzes the conversion of L-threonine, HCO(3)(-)/CO(2) and ATP to give threonylcarbamoyl-AMP (TC-AMP) as the acyladenylate intermediate, with the release of diphosphate. The chain is Threonylcarbamoyl-AMP synthase from Actinobacillus pleuropneumoniae serotype 7 (strain AP76).